Consider the following 449-residue polypeptide: Na(+)/H(+) antiporter NhaA 1 (449 aa).

The next 11 helical transmembrane spans lie at 32–52 (IEATSGAVLLLATVVALTLSN), 87–107 (GLMTLFFFIVALEIKREVVLG), 114–134 (MVAFSVVAAAGGMLVPMGLYL), 145–165 (GWGVVMPTDTAFVIGCLALLG), 174–194 (VFLLSLAVVDDLAAILVVAVG), 202–222 (TALALGAVGLVIIRGMALLGV), 233–253 (AIIWLAVNASGIHATIVGVIL), 318–338 (WVAFGVMPLFALANAGVSITI), 347–367 (LAVMAGFVLGKPIGVTAFAWL), 382–402 (WGGLVGGALLTGIGFTMALFI), and 417–437 (LGILAASVVSSVAGLTLLCMF).

It belongs to the NhaA Na(+)/H(+) (TC 2.A.33) antiporter family.

The protein localises to the cell inner membrane. The catalysed reaction is Na(+)(in) + 2 H(+)(out) = Na(+)(out) + 2 H(+)(in). Na(+)/H(+) antiporter that extrudes sodium in exchange for external protons. This chain is Na(+)/H(+) antiporter NhaA 1, found in Acidiphilium cryptum (strain JF-5).